Reading from the N-terminus, the 573-residue chain is Phosphoenolpyruvate-protein phosphotransferase (573 aa).

The Tele-phosphohistidine intermediate role is filled by His-190. The phosphoenolpyruvate site is built by Arg-297 and Arg-333. Positions 432 and 456 each coordinate Mg(2+). Phosphoenolpyruvate contacts are provided by residues 455–456 and Arg-466; that span reads ND. Cys-503 (proton donor) is an active-site residue.

This sequence belongs to the PEP-utilizing enzyme family. In terms of assembly, homodimer. Requires Mg(2+) as cofactor.

Its subcellular location is the cytoplasm. It carries out the reaction L-histidyl-[protein] + phosphoenolpyruvate = N(pros)-phospho-L-histidyl-[protein] + pyruvate. Its function is as follows. General (non sugar-specific) component of the phosphoenolpyruvate-dependent sugar phosphotransferase system (sugar PTS). This major carbohydrate active-transport system catalyzes the phosphorylation of incoming sugar substrates concomitantly with their translocation across the cell membrane. Enzyme I transfers the phosphoryl group from phosphoenolpyruvate (PEP) to the phosphoryl carrier protein (HPr). The polypeptide is Phosphoenolpyruvate-protein phosphotransferase (ptsI) (Priestia megaterium (Bacillus megaterium)).